The primary structure comprises 218 residues: Glutathione S-transferase U22 (218 aa).

A2 is modified (N-acetylalanine). Residues 3 to 82 (DEVILLDFWP…YIDEVWSDKN (80 aa)) enclose the GST N-terminal domain. Residues 13 to 14 (SP), 39 to 40 (DK), 53 to 54 (KI), and 66 to 67 (ES) each bind glutathione. Positions 88–208 (DPYQRAQARF…LHDSEKILAF (121 aa)) constitute a GST C-terminal domain. T149 carries the post-translational modification Phosphothreonine.

The protein belongs to the GST superfamily. Tau family.

The protein resides in the cytoplasm. The protein localises to the cytosol. The enzyme catalyses RX + glutathione = an S-substituted glutathione + a halide anion + H(+). Its function is as follows. May be involved in the conjugation of reduced glutathione to a wide number of exogenous and endogenous hydrophobic electrophiles and have a detoxification role against certain herbicides. The protein is Glutathione S-transferase U22 (GSTU22) of Arabidopsis thaliana (Mouse-ear cress).